The following is a 447-amino-acid chain: N-succinylarginine dihydrolase (447 aa).

Substrate is bound by residues 19–28 (AGLSFGNEAS), asparagine 110, and 137–138 (HR). Glutamate 174 is an active-site residue. Arginine 212 contacts substrate. Residue histidine 248 is part of the active site. Residues aspartate 250 and asparagine 359 each coordinate substrate. Cysteine 365 (nucleophile) is an active-site residue.

It belongs to the succinylarginine dihydrolase family. As to quaternary structure, homodimer.

It catalyses the reaction N(2)-succinyl-L-arginine + 2 H2O + 2 H(+) = N(2)-succinyl-L-ornithine + 2 NH4(+) + CO2. The protein operates within amino-acid degradation; L-arginine degradation via AST pathway; L-glutamate and succinate from L-arginine: step 2/5. Catalyzes the hydrolysis of N(2)-succinylarginine into N(2)-succinylornithine, ammonia and CO(2). The polypeptide is N-succinylarginine dihydrolase (Escherichia coli (strain K12 / MC4100 / BW2952)).